The chain runs to 96 residues: MKFRPLHDRVVVRRIESEEKTKGGIIIPDTAKEKPQEGEIVAVGPGARDEQGRVNALDVKVGDRVLFGKWSGTEVKIDGQDLLIMKESDIMGVVAA.

Belongs to the GroES chaperonin family. Heptamer of 7 subunits arranged in a ring. Interacts with the chaperonin GroEL.

It localises to the cytoplasm. Functionally, together with the chaperonin GroEL, plays an essential role in assisting protein folding. The GroEL-GroES system forms a nano-cage that allows encapsulation of the non-native substrate proteins and provides a physical environment optimized to promote and accelerate protein folding. GroES binds to the apical surface of the GroEL ring, thereby capping the opening of the GroEL channel. This is Co-chaperonin GroES from Methylorubrum populi (strain ATCC BAA-705 / NCIMB 13946 / BJ001) (Methylobacterium populi).